The sequence spans 742 residues: RING finger protein 145 homolog (742 aa).

The next 11 helical transmembrane spans lie at 109–129 (AAIILSYFVIFISLMFLTLPL), 138–158 (HFLSVFLFGVAYKLSAIYVDL), 178–198 (HGFHFLAQMLLVVLQSMLLEV), 233–253 (ACTGTMIFIATYMLYRAPSLI), 285–305 (ILELLTFTWITMFLMVLYVEL), 318–338 (ILLTGVAETTNTPITLAALAV), 368–388 (SGYTEAVSVVILCIQTGFLGM), 395–415 (ILLALVLYIVISALLQSLFEI), 438–458 (ICIALLLVVIPFFTTKTMLAL), 463–483 (IYTAIIIANSATVTARAIGVI), and 533–553 (VKVGFSFATFAILLFHVIVNI). The segment at 592-630 (CAICFIEMKEEARITPCKHYFHGPCLRKWLAVKMVCPLC) adopts an RING-type; atypical zinc-finger fold. Disordered regions lie at residues 642 to 684 (KSSS…PGDM) and 722 to 742 (AYESDSDAGSEELVIEEENNN). The span at 659–672 (AAVEENPENPEEQP) shows a compositional bias: acidic residues.

It localises to the membrane. The protein resides in the golgi apparatus. The protein localises to the cis-Golgi network. Its subcellular location is the trans-Golgi network. The catalysed reaction is S-ubiquitinyl-[E2 ubiquitin-conjugating enzyme]-L-cysteine + [acceptor protein]-L-lysine = [E2 ubiquitin-conjugating enzyme]-L-cysteine + N(6)-ubiquitinyl-[acceptor protein]-L-lysine.. Its function is as follows. E3 ubiquitin ligase that catalyzes the direct transfer of ubiquitin from E2 ubiquitin-conjugating enzyme to a specific substrate. Acting downstream of probable Golgi transport protein eas-1, involved in inhibition of activation of transcription factor sbp-1, thereby playing a role in regulating AMsh glial cell size. The protein is RING finger protein 145 homolog of Caenorhabditis elegans.